The following is a 128-amino-acid chain: Large ribosomal subunit protein bL20c (128 aa).

Belongs to the bacterial ribosomal protein bL20 family.

The protein resides in the plastid. Its subcellular location is the chloroplast. In terms of biological role, binds directly to 23S ribosomal RNA and is necessary for the in vitro assembly process of the 50S ribosomal subunit. It is not involved in the protein synthesizing functions of that subunit. The sequence is that of Large ribosomal subunit protein bL20c from Daucus carota (Wild carrot).